Here is a 186-residue protein sequence, read N- to C-terminus: uncharacterized protein (186 aa).

The N-acetyltransferase domain occupies 12-184 (LLKSPVEEDD…HIYKLSKQIR (173 aa)).

The protein belongs to the acetyltransferase family.

The protein localises to the cytoplasm. It is found in the nucleus. This is an uncharacterized protein from Schizosaccharomyces pombe (strain 972 / ATCC 24843) (Fission yeast).